The sequence spans 166 residues: NAD(P)H-quinone oxidoreductase subunit I, chloroplastic (166 aa).

2 4Fe-4S ferredoxin-type domains span residues 55–84 (GRIHFEFDKCIACEVCVRVCPIDLPVVDWK) and 95–124 (LNYSIDFGICIFCGNCVEYCPTNCLSMTEE). C64, C67, C70, C74, C104, C107, C110, and C114 together coordinate [4Fe-4S] cluster.

Belongs to the complex I 23 kDa subunit family. As to quaternary structure, NDH is composed of at least 16 different subunits, 5 of which are encoded in the nucleus. Requires [4Fe-4S] cluster as cofactor.

The protein resides in the plastid. It localises to the chloroplast thylakoid membrane. It carries out the reaction a plastoquinone + NADH + (n+1) H(+)(in) = a plastoquinol + NAD(+) + n H(+)(out). The enzyme catalyses a plastoquinone + NADPH + (n+1) H(+)(in) = a plastoquinol + NADP(+) + n H(+)(out). Functionally, NDH shuttles electrons from NAD(P)H:plastoquinone, via FMN and iron-sulfur (Fe-S) centers, to quinones in the photosynthetic chain and possibly in a chloroplast respiratory chain. The immediate electron acceptor for the enzyme in this species is believed to be plastoquinone. Couples the redox reaction to proton translocation, and thus conserves the redox energy in a proton gradient. The polypeptide is NAD(P)H-quinone oxidoreductase subunit I, chloroplastic (Pericome caudata (Mountain tail-leaf)).